The following is a 156-amino-acid chain: Small ribosomal subunit protein uS7 (156 aa).

It belongs to the universal ribosomal protein uS7 family. As to quaternary structure, part of the 30S ribosomal subunit. Contacts proteins S9 and S11.

In terms of biological role, one of the primary rRNA binding proteins, it binds directly to 16S rRNA where it nucleates assembly of the head domain of the 30S subunit. Is located at the subunit interface close to the decoding center, probably blocks exit of the E-site tRNA. This Aromatoleum aromaticum (strain DSM 19018 / LMG 30748 / EbN1) (Azoarcus sp. (strain EbN1)) protein is Small ribosomal subunit protein uS7.